The chain runs to 166 residues: Small ribosomal subunit protein uS3m (166 aa).

The N-terminal 25 residues, 1-25 (MLRSLQHVESHINQCRRISTTSTLL), are a transit peptide targeting the mitochondrion.

Belongs to the universal ribosomal protein uS3 family. As to quaternary structure, component of the mitochondrial ribosome small subunit (28S) which comprises a 12S rRNA and about 30 distinct proteins.

It localises to the mitochondrion. In Caenorhabditis briggsae, this protein is Small ribosomal subunit protein uS3m (mrps-24).